The sequence spans 102 residues: Small ribosomal subunit protein uS10 (102 aa).

The protein belongs to the universal ribosomal protein uS10 family. In terms of assembly, part of the 30S ribosomal subunit.

In terms of biological role, involved in the binding of tRNA to the ribosomes. This is Small ribosomal subunit protein uS10 from Clostridium beijerinckii (strain ATCC 51743 / NCIMB 8052) (Clostridium acetobutylicum).